Reading from the N-terminus, the 132-residue chain is Transmembrane protein C1orf162 homolog (132 aa).

Residues 36 to 56 form a helical membrane-spanning segment; the sequence is IILAFFAGVLLTLLIVALIFL. The disordered stretch occupies residues 95–132; the sequence is TFKPPEENSNDLTRNHSSGLEPTIYSQIKVTDSDLPLP. Positions 104 to 124 are enriched in polar residues; sequence NDLTRNHSSGLEPTIYSQIKV. Ser111 bears the Phosphoserine mark.

The protein resides in the membrane. This is Transmembrane protein C1orf162 homolog from Mus musculus (Mouse).